The chain runs to 115 residues: DNA-binding protein NP_4416A (115 aa).

The segment covering 1 to 11 (MSGEPTDEDLE) has biased composition (acidic residues). The disordered stretch occupies residues 1-46 (MSGEPTDEDLEELRKKKMEQLKEQGGEGQSEAAEAQRQQAEAQKKA). Basic and acidic residues predominate over residues 12–25 (ELRKKKMEQLKEQG). Residues 29–41 (QSEAAEAQRQQAE) are compositionally biased toward low complexity.

This sequence belongs to the PDCD5 family.

This chain is DNA-binding protein NP_4416A, found in Natronomonas pharaonis (strain ATCC 35678 / DSM 2160 / CIP 103997 / JCM 8858 / NBRC 14720 / NCIMB 2260 / Gabara) (Halobacterium pharaonis).